Here is a 780-residue protein sequence, read N- to C-terminus: ATP-dependent 6-phosphofructokinase, muscle type (780 aa).

An N-acetylthreonine modification is found at Thr-2. The interval 2-390 (THEEHHAART…NWEVYKLLAH (389 aa)) is N-terminal catalytic PFK domain 1. Residues Gly-25, 88-89 (RC), and 118-121 (GDGS) contribute to the ATP site. Asp-119 contacts Mg(2+). Phosphoserine is present on Ser-133. Residues 164-166 (SID), Arg-201, 208-210 (MGR), Glu-264, Arg-292, and 298-301 (HVQR) each bind substrate. Residue Asp-166 is the Proton acceptor of the active site. Ser-377 is modified (phosphoserine). Residues 391 to 401 (IRPPAPKSGSY) form an interdomain linker region. A C-terminal regulatory PFK domain 2 region spans residues 402–780 (TVAVMNVGAP…SRKRSGEATV (379 aa)). Residues Arg-471 and 528 to 532 (TVSNN) each bind beta-D-fructose 2,6-bisphosphate. An O-linked (GlcNAc) serine glycan is attached at Ser-530. Lys-557 carries the post-translational modification N6-(2-hydroxyisobutyryl)lysine. Beta-D-fructose 2,6-bisphosphate-binding positions include Arg-566, 573-575 (MGG), Glu-629, Arg-655, and 661-664 (HMQQ). The residue at position 667 (Ser-667) is a Phosphoserine. Arg-735 serves as a coordination point for beta-D-fructose 2,6-bisphosphate. Ser-775 carries the phosphoserine; by PKA modification.

It belongs to the phosphofructokinase type A (PFKA) family. ATP-dependent PFK group I subfamily. Eukaryotic two domain clade 'E' sub-subfamily. As to quaternary structure, homo- and heterotetramers. Phosphofructokinase (PFK) enzyme functions as a tetramer composed of different combinations of 3 types of subunits, called PFKM (M), PFKL (L) and PFKP (P). The composition of the PFK tetramer differs according to the tissue type it is present in. The kinetic and regulatory properties of the tetrameric enzyme are dependent on the subunit composition, hence can vary across tissues. Interacts (via C-terminus) with HK1 (via N-terminal spermatogenic cell-specific region). It depends on Mg(2+) as a cofactor. Post-translationally, glcNAcylation decreases enzyme activity.

The protein localises to the cytoplasm. The enzyme catalyses beta-D-fructose 6-phosphate + ATP = beta-D-fructose 1,6-bisphosphate + ADP + H(+). Its pathway is carbohydrate degradation; glycolysis; D-glyceraldehyde 3-phosphate and glycerone phosphate from D-glucose: step 3/4. With respect to regulation, allosterically activated by ADP, AMP, or fructose 2,6-bisphosphate, and allosterically inhibited by ATP or citrate. Catalyzes the phosphorylation of D-fructose 6-phosphate to fructose 1,6-bisphosphate by ATP, the first committing step of glycolysis. The chain is ATP-dependent 6-phosphofructokinase, muscle type (PFKM) from Oryctolagus cuniculus (Rabbit).